We begin with the raw amino-acid sequence, 65 residues long: Large ribosomal subunit protein bL35 (65 aa).

The disordered stretch occupies residues 1-26 (MPKMKSNKGASKRFKKTASGGFKCKQ).

It belongs to the bacterial ribosomal protein bL35 family.

This is Large ribosomal subunit protein bL35 from Idiomarina loihiensis (strain ATCC BAA-735 / DSM 15497 / L2-TR).